The sequence spans 139 residues: Putative pre-16S rRNA nuclease (139 aa).

The protein belongs to the YqgF nuclease family.

The protein resides in the cytoplasm. Functionally, could be a nuclease involved in processing of the 5'-end of pre-16S rRNA. The protein is Putative pre-16S rRNA nuclease of Bacillus licheniformis (strain ATCC 14580 / DSM 13 / JCM 2505 / CCUG 7422 / NBRC 12200 / NCIMB 9375 / NCTC 10341 / NRRL NRS-1264 / Gibson 46).